The primary structure comprises 548 residues: Folylpolyglutamate synthase (548 aa).

130–133 serves as a coordination point for ATP; that stretch reads GKGS. 3 residues coordinate Mg(2+): serine 157, glutamate 234, and histidine 262. 2 residues coordinate ATP: arginine 382 and aspartate 396.

Belongs to the folylpolyglutamate synthase family. The cofactor is a monovalent cation.

The protein resides in the mitochondrion inner membrane. It is found in the mitochondrion matrix. It localises to the cytoplasm. It carries out the reaction (6S)-5,6,7,8-tetrahydrofolyl-(gamma-L-Glu)(n) + L-glutamate + ATP = (6S)-5,6,7,8-tetrahydrofolyl-(gamma-L-Glu)(n+1) + ADP + phosphate + H(+). It functions in the pathway cofactor biosynthesis; tetrahydrofolylpolyglutamate biosynthesis. Catalyzes conversion of folates to polyglutamate derivatives allowing concentration of folate compounds in the cell and the intracellular retention of these cofactors, which are important substrates for most of the folate-dependent enzymes that are involved in one-carbon transfer reactions involved in purine, pyrimidine and amino acid synthesis. Required for methionine synthesis and maintenance of intact mitochondrial DNA. Involved in telomere maintenance. In Saccharomyces cerevisiae (strain FostersO) (Baker's yeast), this protein is Folylpolyglutamate synthase.